Reading from the N-terminus, the 370-residue chain is Actin-related protein 2/3 complex subunit 1A-B (370 aa).

WD repeat units lie at residues 6-45, 50-89, 140-179, 202-241, 244-284, and 322-365; these read FLLEPITCHAWNKDLTQIAISPNNHEVHIYKNSGNQWVKC, EHNGHITGIDWAPKSDRIVTCGADRNAYVWSQKDGVWKPT, PIRSTVLSLDWHPNNVLLAAGSCDFKTRVFSAYIKEVDEK, SSGGWVHSVSFSASGNKLAWVSHDSTVSVADASKNMSVSQ, TEFL…TFVS, and LHQN…SYIQ.

Belongs to the WD repeat ARPC1 family. As to quaternary structure, component of the Arp2/3 complex.

The protein resides in the cytoplasm. Its subcellular location is the cytoskeleton. The protein localises to the nucleus. In terms of biological role, probably functions as a component of the Arp2/3 complex which is involved in regulation of actin polymerization and together with an activating nucleation-promoting factor (NPF) mediates the formation of branched actin networks. In addition to its role in the cytoplasmic cytoskeleton, the Arp2/3 complex also promotes actin polymerization in the nucleus, thereby regulating gene transcription and repair of damaged DNA. This Xenopus laevis (African clawed frog) protein is Actin-related protein 2/3 complex subunit 1A-B (arpc1a-b).